A 132-amino-acid polypeptide reads, in one-letter code: Small ribosomal subunit protein uS8 (132 aa).

Belongs to the universal ribosomal protein uS8 family. Part of the 30S ribosomal subunit. Contacts proteins S5 and S12.

One of the primary rRNA binding proteins, it binds directly to 16S rRNA central domain where it helps coordinate assembly of the platform of the 30S subunit. This is Small ribosomal subunit protein uS8 from Rhodopseudomonas palustris (strain BisA53).